A 341-amino-acid chain; its full sequence is HTH-type transcriptional repressor PurR (341 aa).

An HTH lacI-type domain is found at 2–56 (ATIKDVAKRANVSTTTVSHVINKTRFVAEETRNAVWAAIKELHYSPSAVARSLKV). The segment at residues 4–23 (IKDVAKRANVSTTTVSHVIN) is a DNA-binding region (H-T-H motif). The DNA-binding element occupies 48–56 (SAVARSLKV). The hypoxanthine site is built by Tyr73, Arg190, Thr192, Phe221, and Asp275.

Homodimer.

The protein operates within purine metabolism; purine nucleotide biosynthesis [regulation]. In terms of biological role, is the main repressor of the genes involved in the de novo synthesis of purine nucleotides, regulating purB, purC, purEK, purF, purHD, purL, purMN and guaBA expression. PurR is allosterically activated to bind its cognate DNA by binding the purine corepressors, hypoxanthine or guanine, thereby effecting transcription repression. This Salmonella typhi protein is HTH-type transcriptional repressor PurR.